Consider the following 250-residue polypeptide: 3-deoxy-manno-octulosonate cytidylyltransferase (250 aa).

Belongs to the KdsB family.

The protein resides in the cytoplasm. It catalyses the reaction 3-deoxy-alpha-D-manno-oct-2-ulosonate + CTP = CMP-3-deoxy-beta-D-manno-octulosonate + diphosphate. Its pathway is nucleotide-sugar biosynthesis; CMP-3-deoxy-D-manno-octulosonate biosynthesis; CMP-3-deoxy-D-manno-octulosonate from 3-deoxy-D-manno-octulosonate and CTP: step 1/1. It functions in the pathway bacterial outer membrane biogenesis; lipopolysaccharide biosynthesis. Activates KDO (a required 8-carbon sugar) for incorporation into bacterial lipopolysaccharide in Gram-negative bacteria. The chain is 3-deoxy-manno-octulosonate cytidylyltransferase from Francisella tularensis subsp. novicida (strain U112).